Reading from the N-terminus, the 576-residue chain is Arginine--tRNA ligase (576 aa).

The 'HIGH' region signature appears at 126–136; sequence ANPTGPMHIGH.

Belongs to the class-I aminoacyl-tRNA synthetase family. Monomer.

Its subcellular location is the cytoplasm. The catalysed reaction is tRNA(Arg) + L-arginine + ATP = L-arginyl-tRNA(Arg) + AMP + diphosphate. The polypeptide is Arginine--tRNA ligase (Rickettsia bellii (strain OSU 85-389)).